The following is a 200-amino-acid chain: Lipopolysaccharide core heptose(II)-phosphate phosphatase (200 aa).

The N-terminal stretch at 1-25 (MLAFCRSSLKSKKYFIILLALAAIA) is a signal peptide.

Belongs to the phosphoglycerate mutase family. Ais subfamily.

Its subcellular location is the periplasm. Its pathway is bacterial outer membrane biogenesis; lipopolysaccharide metabolism. Functionally, catalyzes the dephosphorylation of heptose(II) of the outer membrane lipopolysaccharide core. This is Lipopolysaccharide core heptose(II)-phosphate phosphatase from Escherichia coli O6:H1 (strain CFT073 / ATCC 700928 / UPEC).